A 347-amino-acid chain; its full sequence is Selenide, water dikinase (347 aa).

Cys17 is an active-site residue. Residues Lys20 and 48–50 contribute to the ATP site; that span reads TRD. Asp51 serves as a coordination point for Mg(2+). ATP is bound by residues Asp68, Asp91, and 139–141; that span reads GHS. Asp91 serves as a coordination point for Mg(2+). A Mg(2+)-binding site is contributed by Asp227.

Belongs to the selenophosphate synthase 1 family. Class I subfamily. Homodimer. Mg(2+) serves as cofactor.

It catalyses the reaction hydrogenselenide + ATP + H2O = selenophosphate + AMP + phosphate + 2 H(+). Functionally, synthesizes selenophosphate from selenide and ATP. The sequence is that of Selenide, water dikinase from Cronobacter sakazakii (strain ATCC BAA-894) (Enterobacter sakazakii).